The chain runs to 114 residues: Seed trypsin/chymotrypsin inhibitor TI5-72 (114 aa).

The first 28 residues, 1-28 (MELMNKKVMMKLALMVFLLSFAANVVNA), serve as a signal peptide directing secretion. Positions 29-42 (RFDSTSFITQVLSN) are excised as a propeptide. Disulfide bonds link Cys-50–Cys-103, Cys-51–Cys-66, Cys-54–Cys-99, Cys-56–Cys-64, Cys-73–Cys-80, Cys-77–Cys-92, and Cys-82–Cys-90.

The protein belongs to the Bowman-Birk serine protease inhibitor family. As to expression, seed.

In terms of biological role, inhibitor of trypsin and of chymotrypsin. May function as a natural phytochemical defense against predators. The polypeptide is Seed trypsin/chymotrypsin inhibitor TI5-72 (TI572) (Pisum sativum (Garden pea)).